An 85-amino-acid polypeptide reads, in one-letter code: Large ribosomal subunit protein bL27 (85 aa).

Residues 1–10 (MAQKKGGGST) are compositionally biased toward gly residues. Positions 1-21 (MAQKKGGGSTRNGRDSQPKML) are disordered.

It belongs to the bacterial ribosomal protein bL27 family.

The protein is Large ribosomal subunit protein bL27 of Polaromonas naphthalenivorans (strain CJ2).